We begin with the raw amino-acid sequence, 76 residues long: Demidefensin-3 (76 aa).

The signal sequence occupies residues 1–22; that stretch reads MRTLALHTAMLLLVALHAQAEA. Residues 23-64 constitute a propeptide that is removed on maturation; that stretch reads RQARADEAAAQQQPGADDQGMAHSFTWPENAALPLSESERGL. The tract at residues 25-45 is disordered; sequence ARADEAAAQQQPGADDQGMAH. Over residues 30-44 the composition is skewed to low complexity; the sequence is AAAQQQPGADDQGMA. Residues cysteine 68 and cysteine 73 are joined by a disulfide bond. A propeptide spanning residues 74-76 is cleaved from the precursor; that stretch reads RLL.

Belongs to the alpha-defensin family. Theta subfamily. As to quaternary structure, forms a cyclic homodimer; disulfide-linked. Post-translationally, this is a cyclic peptide.

In terms of biological role, has antimicrobial activities against bacteria and fungi. The sequence is that of Demidefensin-3 from Macaca mulatta (Rhesus macaque).